The chain runs to 123 residues: uncharacterized protein (123 aa).

Disordered stretches follow at residues 1–33 (MAPP…RRRK) and 82–123 (EKAA…EDKS). Over residues 18-33 (KLFKRRRVLSRDRRRK) the composition is skewed to basic residues.

This is an uncharacterized protein from Mus musculus (Mouse).